A 103-amino-acid polypeptide reads, in one-letter code: Large ribosomal subunit protein bL21 (103 aa).

Belongs to the bacterial ribosomal protein bL21 family. In terms of assembly, part of the 50S ribosomal subunit. Contacts protein L20.

This protein binds to 23S rRNA in the presence of protein L20. The chain is Large ribosomal subunit protein bL21 from Psychrobacter arcticus (strain DSM 17307 / VKM B-2377 / 273-4).